The chain runs to 256 residues: Ubiquinone/menaquinone biosynthesis C-methyltransferase UbiE (256 aa).

S-adenosyl-L-methionine-binding positions include Thr79, Asp100, and Asp128 to Ala129.

This sequence belongs to the class I-like SAM-binding methyltransferase superfamily. MenG/UbiE family.

It catalyses the reaction a 2-demethylmenaquinol + S-adenosyl-L-methionine = a menaquinol + S-adenosyl-L-homocysteine + H(+). The catalysed reaction is a 2-methoxy-6-(all-trans-polyprenyl)benzene-1,4-diol + S-adenosyl-L-methionine = a 5-methoxy-2-methyl-3-(all-trans-polyprenyl)benzene-1,4-diol + S-adenosyl-L-homocysteine + H(+). It functions in the pathway quinol/quinone metabolism; menaquinone biosynthesis; menaquinol from 1,4-dihydroxy-2-naphthoate: step 2/2. Its pathway is cofactor biosynthesis; ubiquinone biosynthesis. Its function is as follows. Methyltransferase required for the conversion of demethylmenaquinol (DMKH2) to menaquinol (MKH2) and the conversion of 2-polyprenyl-6-methoxy-1,4-benzoquinol (DDMQH2) to 2-polyprenyl-3-methyl-6-methoxy-1,4-benzoquinol (DMQH2). The protein is Ubiquinone/menaquinone biosynthesis C-methyltransferase UbiE of Pseudomonas paraeruginosa (strain DSM 24068 / PA7) (Pseudomonas aeruginosa (strain PA7)).